The primary structure comprises 256 residues: tRNA pseudouridine synthase A (256 aa).

The Nucleophile role is filled by Asp-43. A substrate-binding site is contributed by Tyr-94.

The protein belongs to the tRNA pseudouridine synthase TruA family.

It catalyses the reaction uridine(38/39/40) in tRNA = pseudouridine(38/39/40) in tRNA. Its function is as follows. Formation of pseudouridine at positions 38, 39 and 40 in the anticodon stem and loop of transfer RNAs. This Pyrobaculum aerophilum (strain ATCC 51768 / DSM 7523 / JCM 9630 / CIP 104966 / NBRC 100827 / IM2) protein is tRNA pseudouridine synthase A.